Consider the following 350-residue polypeptide: Iron-regulated surface determinant protein A (350 aa).

Positions 1-46 are cleaved as a signal peptide; it reads MTKHYLNSKYQSEQRSSAMKKITMGTASIILGSLVYIGADSQQVNA. Positions 62 to 184 constitute an NEAT domain; sequence SQATSQPINF…EFEKAIPTLA (123 aa). Lys-75, Ser-82, and Tyr-166 together coordinate heme. Residues 188–314 form a disordered region; sequence KPNNVKPVQP…KQASKAKELP (127 aa). A compositionally biased stretch (low complexity) spans 203–214; the sequence is KTPTEQTKPVQP. Composition is skewed to polar residues over residues 252 to 268 and 278 to 296; these read AHTVKTAQTAQEQNKVQ and KSESNNQAVSDNKSQQTNK. The span at 299–314 shows a compositional bias: basic and acidic residues; the sequence is KHNETPKQASKAKELP. The LPXTG sorting signal motif lies at 313–317; it reads LPKTG. Thr-316 is modified (pentaglycyl murein peptidoglycan amidated threonine). Residues 317 to 350 constitute a propeptide, removed by sortase A; sequence GLTSVDNFISTVAFATLALLGSLSLLLFKRKESK.

It belongs to the IsdA family. Monomer. Interacts with IsdC. Interacts with IsdB.

The protein localises to the secreted. It localises to the cell wall. Cell wall-anchored surface receptor that participates in the extraction of heme from oxidized methemoglobin/metHb to enable growth on hemoglobin as a sole iron source. Receives heme from IsdB and transfers it to IsdC. Also plays a role in the inhibition of host immune response. Protects S.aureus against the bactericidal protease activity of apolactoferrin. Decreases bacterial cellular hydrophobicity, which renders S.aureus resistant to bactericidal human skin fatty acids as well as to beta-defensins and cathelicidin. Also binds fibronectin and chains B-beta and gamma of fibrinogen, promoting clumping of S.aureus with fibrinogen. Involved in adherence of S.aureus to human desquamated nasal epithelial cells and is required for nasal colonization. The polypeptide is Iron-regulated surface determinant protein A (isdA) (Staphylococcus aureus (strain Mu3 / ATCC 700698)).